The primary structure comprises 618 residues: Glutamine--fructose-6-phosphate aminotransferase [isomerizing] (618 aa).

Catalysis depends on Cys2, which acts as the Nucleophile; for GATase activity. Residues 2–226 enclose the Glutamine amidotransferase type-2 domain; that stretch reads CGIVGYAGRN…DFETAVLSPT (225 aa). Positions 69–94 are disordered; it reads HTRWATHGRPSTKNAHPHNSGGNPGK. 2 consecutive SIS domains span residues 295-434 and 467-608; these read SEDE…VRDR and CAEG…IDKP. Lys613 (for Fru-6P isomerization activity) is an active-site residue.

Homodimer.

The protein resides in the cytoplasm. The catalysed reaction is D-fructose 6-phosphate + L-glutamine = D-glucosamine 6-phosphate + L-glutamate. Catalyzes the first step in hexosamine metabolism, converting fructose-6P into glucosamine-6P using glutamine as a nitrogen source. The sequence is that of Glutamine--fructose-6-phosphate aminotransferase [isomerizing] from Methanosarcina acetivorans (strain ATCC 35395 / DSM 2834 / JCM 12185 / C2A).